The sequence spans 129 residues: Keratin-associated protein 5-6 (129 aa).

6 repeat units span residues 28-31, 34-37, 40-43, 90-93, 109-112, and 119-122. The tract at residues 28–112 is 6 X 4 AA repeats of C-C-X-P; the sequence is CCVPICCCKP…SCCQSSCCKP (85 aa).

The protein belongs to the KRTAP type 5 family. As to quaternary structure, interacts with hair keratins. Expressed in hair root and not in skin. Expressed also in liver and skeletal muscle.

In terms of biological role, in the hair cortex, hair keratin intermediate filaments are embedded in an interfilamentous matrix, consisting of hair keratin-associated protein (KRTAP), which are essential for the formation of a rigid and resistant hair shaft through their extensive disulfide bond cross-linking with abundant cysteine residues of hair keratins. The matrix proteins include the high-sulfur and high-glycine-tyrosine keratins. This is Keratin-associated protein 5-6 (KRTAP5-6) from Homo sapiens (Human).